A 472-amino-acid chain; its full sequence is Interferon-induced protein with tetratricopeptide repeats 2 (472 aa).

N-acetylserine is present on Ser-2. TPR repeat units lie at residues 51–89 (ATMC…ADQA), 90–135 (EIRS…RIES), 136–171 (PELD…KPKN), 172–208 (PEFT…NPDN), 247–280 (TDVL…IPNN), 281–335 (AYLH…NLFR), 336–366 (VCSI…KELT), 367–405 (PVAK…NQKS), and 406–448 (REKE…KMQQ). The disordered stretch occupies residues 446–472 (MQQADEDSERGLESGSLIPSASSWNGE). Residues 462 to 472 (LIPSASSWNGE) are compositionally biased toward polar residues.

It belongs to the IFIT family. As to quaternary structure, domain-swapped homodimer. Component of an interferon-dependent multiprotein complex, at least composed of IFIT1, IFIT2 and IFIT3. Interacts with IFIT1 and IFIT3. Interacts with STING1/MITA and disrupts its interaction with MAVS or TBK1. Interacts with EIF3E and EIF3C.

The protein resides in the cytoplasm. It is found in the endoplasmic reticulum. In terms of biological role, IFN-induced antiviral protein which inhibits expression of viral messenger RNAs lacking 2'-O-methylation of the 5' cap. The ribose 2'-O-methylation would provide a molecular signature to distinguish between self and non-self mRNAs by the host during viral infection. Viruses evolved several ways to evade this restriction system such as encoding their own 2'-O-methylase for their mRNAs or by stealing host cap containing the 2'-O-methylation (cap snatching mechanism). Binds AU-rich viral RNAs, with or without 5' triphosphorylation, RNA-binding is required for antiviral activity. Can promote apoptosis. The polypeptide is Interferon-induced protein with tetratricopeptide repeats 2 (IFIT2) (Homo sapiens (Human)).